The chain runs to 288 residues: MALFQKKKYIKINPNRSIIEKQAEQPEVPDELFAKCPACKHTIYQKDLGKNKVCPNCDYNFRITAKERLAIVADKDSFIEMFTGIESKNPLDFPGYPEKLAATKARTGLDEAVMTGTATIKGQKTALAIMDSTFIMASMGTVVGEKLTRLFEYATTEKLPIIVFTASGGARMQEGIMSLMQMAKTSAAVKRHSNAGLFYITVLTDPTTGGVTASFASLGDIILAEPQSLIGFAGRRVIEQTVRQTLPDDFQKAEFLLNHGFVDAIVKRTELRQKLALLLELHTEVENV.

The region spanning 32–288 (LFAKCPACKH…LELHTEVENV (257 aa)) is the CoA carboxyltransferase N-terminal domain. Cysteine 36, cysteine 39, cysteine 54, and cysteine 57 together coordinate Zn(2+). The C4-type zinc finger occupies 36-57 (CPACKHTIYQKDLGKNKVCPNC).

This sequence belongs to the AccD/PCCB family. Acetyl-CoA carboxylase is a heterohexamer composed of biotin carboxyl carrier protein (AccB), biotin carboxylase (AccC) and two subunits each of ACCase subunit alpha (AccA) and ACCase subunit beta (AccD). It depends on Zn(2+) as a cofactor.

Its subcellular location is the cytoplasm. It carries out the reaction N(6)-carboxybiotinyl-L-lysyl-[protein] + acetyl-CoA = N(6)-biotinyl-L-lysyl-[protein] + malonyl-CoA. It functions in the pathway lipid metabolism; malonyl-CoA biosynthesis; malonyl-CoA from acetyl-CoA: step 1/1. Component of the acetyl coenzyme A carboxylase (ACC) complex. Biotin carboxylase (BC) catalyzes the carboxylation of biotin on its carrier protein (BCCP) and then the CO(2) group is transferred by the transcarboxylase to acetyl-CoA to form malonyl-CoA. The protein is Acetyl-coenzyme A carboxylase carboxyl transferase subunit beta of Lactococcus lactis subsp. cremoris (strain MG1363).